The primary structure comprises 307 residues: Porphobilinogen deaminase (307 aa).

The residue at position 239 (cysteine 239) is an S-(dipyrrolylmethanemethyl)cysteine.

The protein belongs to the HMBS family. As to quaternary structure, monomer. Requires dipyrromethane as cofactor.

It catalyses the reaction 4 porphobilinogen + H2O = hydroxymethylbilane + 4 NH4(+). The protein operates within porphyrin-containing compound metabolism; protoporphyrin-IX biosynthesis; coproporphyrinogen-III from 5-aminolevulinate: step 2/4. Functionally, tetrapolymerization of the monopyrrole PBG into the hydroxymethylbilane pre-uroporphyrinogen in several discrete steps. This chain is Porphobilinogen deaminase (hemC), found in Campylobacter jejuni subsp. jejuni serotype O:2 (strain ATCC 700819 / NCTC 11168).